Consider the following 360-residue polypeptide: CCA-adding enzyme (360 aa).

Residues Gly8 and Arg11 each contribute to the ATP site. Positions 8 and 11 each coordinate CTP. Positions 21 and 23 each coordinate Mg(2+). Positions 91, 137, and 140 each coordinate ATP. CTP-binding residues include Arg91, Arg137, and Arg140.

It belongs to the tRNA nucleotidyltransferase/poly(A) polymerase family. Bacterial CCA-adding enzyme type 2 subfamily. Mg(2+) is required as a cofactor.

The enzyme catalyses a tRNA precursor + 2 CTP + ATP = a tRNA with a 3' CCA end + 3 diphosphate. It carries out the reaction a tRNA with a 3' CCA end + 2 CTP + ATP = a tRNA with a 3' CCACCA end + 3 diphosphate. In terms of biological role, catalyzes the addition and repair of the essential 3'-terminal CCA sequence in tRNAs without using a nucleic acid template. Adds these three nucleotides in the order of C, C, and A to the tRNA nucleotide-73, using CTP and ATP as substrates and producing inorganic pyrophosphate. tRNA 3'-terminal CCA addition is required both for tRNA processing and repair. Also involved in tRNA surveillance by mediating tandem CCA addition to generate a CCACCA at the 3' terminus of unstable tRNAs. While stable tRNAs receive only 3'-terminal CCA, unstable tRNAs are marked with CCACCA and rapidly degraded. In Francisella tularensis subsp. tularensis (strain FSC 198), this protein is CCA-adding enzyme.